A 155-amino-acid chain; its full sequence is HTH-type transcriptional regulator IscR (155 aa).

In terms of domain architecture, HTH rrf2-type spans 2–136 (KLSTKGRYAM…HQTRLSDIIK (135 aa)). Positions 30 to 53 (LAEVSKRQDISLPYLEQLFVKLRR) form a DNA-binding region, H-T-H motif. Residues 141 to 145 (PCPAV) form a heme regulatory motif (HRM) region. Cysteine 142 is a binding site for [2Fe-2S] cluster.

It depends on [2Fe-2S] cluster as a cofactor.

Regulates the transcription of several operons and genes involved in the biogenesis of Fe-S clusters and Fe-S-containing proteins. Functions as a transcriptional repressor of genes involved in iron metabolism by directly binding to the promoter region of genes preceded by the Iron-Rhodo-box motif. Binds to iscR and hemP promoter regions independently of an Fe-S cluster, but their transcriptional repression is Fe-S cluster-dependent. Seems to activate some target genes in a Fe-S cluster-independent manner. Negatively regulates its own transcription in the presence of iron only. The protein is HTH-type transcriptional regulator IscR of Cereibacter sphaeroides (strain ATCC 17023 / DSM 158 / JCM 6121 / CCUG 31486 / LMG 2827 / NBRC 12203 / NCIMB 8253 / ATH 2.4.1.) (Rhodobacter sphaeroides).